Reading from the N-terminus, the 754-residue chain is Glutathione biosynthesis bifunctional protein GshAB (754 aa).

The glutamate--cysteine ligase stretch occupies residues 1–333 (MHINQLLQHA…KAQKLNDKIA (333 aa)). In terms of domain architecture, ATP-grasp spans 489–752 (KKILRENGYP…LAKLFPEIST (264 aa)). Position 516-574 (516-574 (SQIKNKPIVVKPKTTNFGLGISIFETAASHNDYEKALDIAFIEDYSVLVEEFIPGTEYR)) interacts with ATP. 3 residues coordinate Mg(2+): Asp696, Glu717, and Asn719. Asp696, Glu717, and Asn719 together coordinate Mn(2+).

The protein in the N-terminal section; belongs to the glutamate--cysteine ligase type 1 family. Type 2 subfamily. As to quaternary structure, monomer. Mg(2+) serves as cofactor. The cofactor is Mn(2+).

The enzyme catalyses L-cysteine + L-glutamate + ATP = gamma-L-glutamyl-L-cysteine + ADP + phosphate + H(+). It carries out the reaction gamma-L-glutamyl-L-cysteine + glycine + ATP = glutathione + ADP + phosphate + H(+). Its pathway is sulfur metabolism; glutathione biosynthesis; glutathione from L-cysteine and L-glutamate: step 1/2. It functions in the pathway sulfur metabolism; glutathione biosynthesis; glutathione from L-cysteine and L-glutamate: step 2/2. In terms of biological role, synthesizes glutathione from L-glutamate and L-cysteine via gamma-L-glutamyl-L-cysteine. In Streptococcus mutans serotype c (strain ATCC 700610 / UA159), this protein is Glutathione biosynthesis bifunctional protein GshAB.